Here is a 112-residue protein sequence, read N- to C-terminus: UPF0482 protein Ent638_1930 (112 aa).

Residues 1–27 (MTTLRKRLCLATLLSLTALAFTAPVSA) form the signal peptide.

This sequence belongs to the UPF0482 family.

This is UPF0482 protein Ent638_1930 from Enterobacter sp. (strain 638).